The primary structure comprises 582 residues: MIKTQESLTLEDVAVEFSWEEWQLLDTAQKNLYRDVMVENYNHLVSLGYQTSKPDVLSKLAHGQEPWITVAKIQNKNCPGIGKADSLLQEHSLNQRLLKSVQQCNGQNTLRNTVHLSKTHFPIVQNHDTFDLYRKNLKSSLSLINQKRRHGINNPVEFIGGEKTLKHECMHAKTRFSENAKCIHTKFQVFKHQRTQKIEKPHACIECEQTFLRKSQLIYHENIHIPENPGSGQCEKLSRSVLFTKHLKTNTRDKICIPNEYRKGSTVNSRLIAHQQTHTEEKSYMCSECGKGFTMKRYLIAHQRTHSGEKPYVCNECGKGFTVKSNLIVHQRTHTGEKPYICSECGKGFTMKRYLVVHQRTHTGEKPYICSECGKGFTVKSNLIVHQRSHTGEKSYICSECGKGFTVKRTLIIHQRTHTGEKSYICNECGKGFTTKRTLIIHQRTHTGEKPYECNECGKAFSQKICLIQHERCHTGKTPFVCTECGKSYSHKYGLITHQRIHTGEKPYECNECGKAFTTKSVLNVHQRTHTGERPYGCSDCEKAFSHLSNLVKHKKMHTREMGRISQVENSCNEESQLLPYK.

Residues 8 to 79 (LTLEDVAVEF…VAKIQNKNCP (72 aa)) form the KRAB domain. A C2H2-type 1 zinc finger spans residues 202–224 (HACIECEQTFLRKSQLIYHENIH). The C2H2-type 2; degenerate zinc-finger motif lies at 254–278 (KICIPNEYRKGSTVNSRLIAHQQTH). 10 consecutive C2H2-type zinc fingers follow at residues 284–306 (YMCSECGKGFTMKRYLIAHQRTH), 312–334 (YVCNECGKGFTVKSNLIVHQRTH), 340–362 (YICSECGKGFTMKRYLVVHQRTH), 368–390 (YICSECGKGFTVKSNLIVHQRSH), 396–418 (YICSECGKGFTVKRTLIIHQRTH), 424–446 (YICNECGKGFTTKRTLIIHQRTH), 452–474 (YECNECGKAFSQKICLIQHERCH), 480–502 (FVCTECGKSYSHKYGLITHQRIH), 508–530 (YECNECGKAFTTKSVLNVHQRTH), and 536–558 (YGCSDCEKAFSHLSNLVKHKKMH).

The protein belongs to the krueppel C2H2-type zinc-finger protein family.

The protein resides in the nucleus. In terms of biological role, may be involved in transcriptional regulation. This Macaca fascicularis (Crab-eating macaque) protein is Zinc finger protein 614 (ZNF614).